The chain runs to 248 residues: 2,3-bisphosphoglycerate-dependent phosphoglycerate mutase (248 aa).

Substrate is bound by residues 8 to 15 (RHGESVWN), 21 to 22 (TG), Arg-60, 87 to 90 (ERHY), Lys-98, and 114 to 115 (RR). His-9 serves as the catalytic Tele-phosphohistidine intermediate. Catalysis depends on Glu-87, which acts as the Proton donor/acceptor. The disordered stretch occupies residues 116-135 (SYDTPPPPMEVSDPRHPSHD). 183-184 (GN) is a substrate binding site.

This sequence belongs to the phosphoglycerate mutase family. BPG-dependent PGAM subfamily. Homodimer.

The catalysed reaction is (2R)-2-phosphoglycerate = (2R)-3-phosphoglycerate. The protein operates within carbohydrate degradation; glycolysis; pyruvate from D-glyceraldehyde 3-phosphate: step 3/5. In terms of biological role, catalyzes the interconversion of 2-phosphoglycerate and 3-phosphoglycerate. The chain is 2,3-bisphosphoglycerate-dependent phosphoglycerate mutase from Bdellovibrio bacteriovorus (strain ATCC 15356 / DSM 50701 / NCIMB 9529 / HD100).